Reading from the N-terminus, the 2350-residue chain is MQGPYSLNGYRVRVYRQDSATQWFTGIITHHDLFTRTMIVMNDQVLEPQNVDPSMVQMTFLDDVVHSLLKGENIGITSRRRSRASQNISTVHGHYTRAQANSPRPAMNSQAAVPKQNTHQQQQQRSIRPNKRKGSDSSIPDEEKMKEDKYDCVSRGENPKGKNKHVVTKRRKPEEAEKRLSMKRLRTDNASDASESSDAESSSKRVTETSSSEPMPEYEPKNKVTSKVNGEEGQSQAAEEAGEETLIDTRPPWDQMQEDKNHNEGEKPKSTDSHLQDKMTLRSSEQATVADHNSNDSVLQECNVENQRTVELLPKDRLVSRTPTPKCVTDIKNDTHSERAAQENLNTFGLQTPENMDPNVSDSKHSNAKYLETAKQDCDQSWVSDVVKVDLTQSSVTNAPSGSDKRDTEKERNHYVSYMSSLSAVSVTEDQLHKRSPPPETIKAKLTTSVDTQKAKSSSSPEVVKPKITHSPDSVKSKAAYGNSQAVGERRLANKIEHELSRGSFHPVPTRGSALETTKSPLIIDKNEHFTVYRDPALIGSETGANHISPFLSQHPFSLHSSSHRTCLNPGTHHPALTPGPHLLAGSTSQTPLPTINTHPLTSGPHHPVHHPHLLPTVLPGVPTASLLGGHPRLESAHASSLSHLALAHQQQQQLLQHQSPHLLGQAHPSASYNQLGLYPIIWQYPNGTHAYSGLGLPSSKWVHPENAVNAEASLRRNSPSPWLHQPTPVTSADGIGLLSHIPVRPSSAEPHRPHKITVHSSPPLTKTLADHHKEELERKAFMEPLRSNASTSVKGDLDLNRSQAGKDCHLHRHFVGPRPPQETGERLNKYKEEHRRILQESIDVAPFTTKIKGHEVERENYSRVVPSSSSPKSHAIKQDKDVDRSVSEIYKMKHSVPQSLPQSNYFTTLSNSVVNEPPRSYPSKEVSNIYTEKQNNNLSATANPQTHSFISSLSKPPPLIKHQPESESLVGKIPDHLPHQSASHSVTTFRSDCRSPTHLTVSSTNALRSMPALHRAPVFHPPIHHSLERKESSYSSLSPPTLTPVMPVNAGGKVQESQKPPTLIPEPKDSQSNFKNSSDQSLTEMWRSNNNLNREKAEWPVEKSSGKSQAAVASVIVRPPSSTKVDSVPSVPLASKDRVCERSSSGANKTDYLKPEAGETGRIILPNVNLESAHVKSEKNFEAVSQGNVPVSVMSAVNVVSTTKADVFTSAATTTSVSSLSSAETSYSLSNTISASTPFECTSSKSVVSQAVAQAKDCTVSTAVPGTLACSKTGSAVQPGSGFSGTTDFIHLKKHKAALAAAQFKNSSVSEAELNTVRNQTVAASLPLDSTMTCTASNKAISVGNGPAAQSSQPNYHTKLKKAWLTRHSEEDKNTNKMENSGNSVSEIIKPCSVNLIASTSNDIENRADGRVAVDKYGRDEKVSRRKAKRTYESGSESGDSDESESKSEQRTKRQPKPTYKKKQNDLQKRKGEVEEDSKPNGVLSRSAKDKSKLKLQNSNSAGVPRSVLKDWRKVKKLKQTGESFLQDDSCCEIGPNLQKCRECRLIRSKKGEESTHSPVFCRFYYFRRLSFSKNGVVRIDGFSSPDQYDDEAMSLWTHENYEDDEVDVETSKYILDIIGDKFCQLVTSEKTALSWVKKDAKIAWKRAVRGVREMCDACEATLFNVHWVCRKCGFVACLDCYKAKERKSSRDKELYAWMKCVKGQPHDHKHLMLTQIIPGSVLTDLLDAMHILREKYGIKSHCHCTNRQNLQGGNVPTMNGVSQVLQNVLHHSNKTSVSLPESQQQNSPQKSQTNGNSSPGSASTDSRLTPPESQSPLHWLADLAEQKSREEKQENKEFTLEREIKEDGDQDASDSPNGSTSPPASQSNEQGSTLRDLLTTTAGKLRVGSTDAGIAFAPVYSMGTSSGKGGRTMPNILDDIIASVVENKIPPNKTSKINIKSEPNEEPKESSLPATDESNKSYRDIPHSWICDQHILWLKDYKNSNNWKLFKECWKQGQPAVVSGVHKKMNISLWKAESISLDFGDHQADLLNCKDSIVSNANVKEFWDGFEEVSKRQKNKGGETVVLKLKDCPSGEDFKAMMPTRYEDFLRCLPLPEYCNPEGKFNLASHLPGFFVRPDLGPRLCSAYGVAAAKDHDIGTTNLHIEASDVVNVLVYVGIAKGNGVLSKAGILKKFEEEELDDVLRKRLKDSSEIPGALWHIYAGKDVDKIREFLQKISKEQGLEVLPEHDPIRDQSWYVNRKLRQRLLEEYGVRACTLIQFLGDAIVLPAGTLHQVQNFHSCVQVTEDFVSPEHLVQSFHLTQELRLLKEEINYDDKLQVKNILYHAVKEMVRALKMHEDEVEDMEDT.

2 disordered regions span residues 96 to 302 and 314 to 336; these read TRAQ…LQEC and PKDRLVSRTPTPKCVTDIKNDTH. Polar residues predominate over residues 98–127; the sequence is AQANSPRPAMNSQAAVPKQNTHQQQQQRSI. Phosphoserine is present on residues serine 135 and serine 138. Basic and acidic residues predominate over residues 141 to 160; that stretch reads DEEKMKEDKYDCVSRGENPK. Residues 161 to 171 show a composition bias toward basic residues; sequence GKNKHVVTKRR. Basic and acidic residues predominate over residues 172–189; it reads KPEEAEKRLSMKRLRTDN. Residues 190 to 200 are compositionally biased toward low complexity; the sequence is ASDASESSDAE. Residues serine 191 and serine 194 each carry the phosphoserine modification. Basic and acidic residues predominate over residues 257-280; that stretch reads QEDKNHNEGEKPKSTDSHLQDKMT. The span at 281–302 shows a compositional bias: polar residues; sequence LRSSEQATVADHNSNDSVLQEC. A phosphoserine mark is found at serine 294 and serine 320. A Phosphothreonine modification is found at threonine 324. 7 positions are modified to phosphoserine: serine 420, serine 436, serine 457, serine 458, serine 460, serine 471, and serine 762. 5 disordered regions span residues 426-486, 747-766, 859-883, 1030-1083, and 1422-1508; these read SVTE…NSQA, SSAEPHRPHKITVHSSPPLT, RENYSRVVPSSSSPKSHAIKQDKDV, RKES…DQSL, and EKVS…VPRS. Low complexity-rich tracts occupy residues 863–874 and 1034–1045; these read SRVVPSSSSPKS and SYSSLSPPTLTP. The segment covering 1071–1083 has biased composition (polar residues); that stretch reads SQSNFKNSSDQSL. Over residues 1454–1463 the composition is skewed to basic residues; sequence KRQPKPTYKK. Residues 1464–1480 show a composition bias toward basic and acidic residues; the sequence is KQNDLQKRKGEVEEDSK. Residues 1657–1682 form a C6-type zinc finger; sequence CDACEATLFNVHWVCRKCGFVACLDC. Polar residues predominate over residues 1776 to 1818; it reads KTSVSLPESQQQNSPQKSQTNGNSSPGSASTDSRLTPPESQSP. Residues 1776–1874 form a disordered region; it reads KTSVSLPESQ…PASQSNEQGS (99 aa). The residue at position 1800 (serine 1800) is a Phosphoserine. Positions 1826–1849 are enriched in basic and acidic residues; sequence AEQKSREEKQENKEFTLEREIKED. Over residues 1855–1874 the composition is skewed to polar residues; the sequence is SDSPNGSTSPPASQSNEQGS. The LXXLL motif signature appears at 1876–1880; sequence LRDLL. Positions 1933–1962 are disordered; sequence PNKTSKINIKSEPNEEPKESSLPATDESNK. Residue lysine 1942 forms a Glycyl lysine isopeptide (Lys-Gly) (interchain with G-Cter in SUMO2) linkage. Residues 2084-2308 enclose the JmjC domain; the sequence is MPTRYEDFLR…QSFHLTQELR (225 aa). The Fe cation site is built by histidine 2146, glutamate 2148, and histidine 2276.

It belongs to the JHDM2 histone demethylase family. Fe(2+) serves as cofactor.

The protein localises to the nucleus. Functionally, probable histone demethylase that specifically demethylates 'Lys-9' of histone H3, thereby playing a central role in histone code. Demethylation of Lys residue generates formaldehyde and succinate. May be involved in hormone-dependent transcriptional activation, by participating in recruitment to androgen-receptor target genes. This Mus musculus (Mouse) protein is Probable JmjC domain-containing histone demethylation protein 2C (Jmjd1c).